The primary structure comprises 1017 residues: Multiple C2 domain and transmembrane region protein 14 (1017 aa).

A C2 1 domain is found at 1 to 110; the sequence is MADNVLRKLI…ASAGSETLVY (110 aa). The disordered stretch occupies residues 139 to 231; the sequence is AAPAATEPKP…PAEVKNPPIP (93 aa). Positions 141 to 153 are enriched in low complexity; it reads PAATEPKPEAAAA. Residues 154–213 show a composition bias toward basic and acidic residues; sequence TEEKPPEIAKAEDGKKETEAAKTEEKKEGDKKEEEKPKEEAKPDEKKPDAPPDTKAKKPD. Pro residues predominate over residues 217–231; sequence APPPPPAEVKNPPIP. 3 C2 domains span residues 258–387, 420–554, and 587–714; these read DLEL…PQWY, DSGG…SRWF, and VTSD…LNSY. Ca(2+) is bound by residues D296, N299, D352, T355, and E359. The next 2 helical transmembrane spans lie at 851-871 and 957-977; these read VAIVLCPHLVLPTVFMYAFLI and ATCIFVVFCLFASFLFYIVPF.

Belongs to the MCTP family. The cofactor is Ca(2+). In terms of tissue distribution, expressed in incipient leaf primordia and in roots meristems. Observed in flowers.

The protein resides in the membrane. The protein localises to the vesicle. Its subcellular location is the golgi apparatus membrane. Its function is as follows. May function as a signaling molecule by regulating the trafficking of other regulators. The polypeptide is Multiple C2 domain and transmembrane region protein 14 (Arabidopsis thaliana (Mouse-ear cress)).